The following is a 208-amino-acid chain: MSSRKKNILKVIILGDSGVGKTSLMHRYVNDKYSQQYKATIGADFLTKEVTVDGDKVATMQVWDTAGQERFQSLGVAFYRGADCCVLVYDVTNASSFENIKSWRDEFLVHANVNSPETFPFVILGNKIDAEESKKIVSEKSAQELAKSLGDIPLFLTSAKNAINVDTAFEEIARSALQQNQADTEAFEDDYNDAINIRLDGENNSCSC.

Residues 17–23, 33–40, Gly67, and 126–129 contribute to the GTP site; these read SGVGKTS, YSQQYKAT, and NKID. Residues 37 to 45 carry the Effector region motif; it reads YKATIGADF. Lys147 participates in a covalent cross-link: Glycyl lysine isopeptide (Lys-Gly) (interchain with G-Cter in ubiquitin). 158 to 160 provides a ligand contact to GTP; that stretch reads SAK. S-geranylgeranyl cysteine attachment occurs at residues Cys206 and Cys208. The residue at position 208 (Cys208) is a Cysteine methyl ester.

It belongs to the small GTPase superfamily. Rab family. In terms of assembly, interacts with IVY1. Interacts with YIF1, YIP4 and YIP5. Interacts with the HOPS complex. Interacts with the class C-Vps complex. Interacts with VPS35. Interacts with VPS39. Interacts with the GDP dissociation inhibitor GDI1. Interacts with CCZ1.

The protein resides in the late endosome. The protein localises to the vacuole membrane. Rab activation is generally mediated by a guanine exchange factor (GEF), while inactivation through hydrolysis of bound GTP is catalyzed by a GTPase activating protein (GAP). YPT7 is activated by GEFs MON1-CCZ1 complex (MC1) and VAM6/VPS39, and inactivated by GAPs GYP7 and GYP1. In terms of biological role, ypt/Rab-type GTPases are key regulators of membrane trafficking and intracellular vesicular transport. They act as molecular switches that convert between GTP-bound and GDP-bound states, and regulate virtually all steps of membrane traffic from the formation of the transport vesicle at the donor membrane to its fusion at the target membrane. In the GDP-bound state, Ypt proteins are predominantly cytosolic, solubilized through the interaction with a GDP dissociation inhibitor (GDI). In the GTP-bound state, the proteins are membrane bound and interact with specific effector proteins that select cargo, promote vesicle movement, or verify the correct site of fusion. Involved in regulation of vesicular protein transport in exo- and endocytosis. Involved in regulation of late endosome to vacuole trafficking and homotypic vacuole fusion, by interacting in its GTP-bound state on the donor membrane with the large multiprotein HOPS/class C-Vps tethering complex on the acceptor membrane. Involved in retromer assembly and cargo export, recognizing the cargo selection complex (CSC). GTP-bound YPT7 recruits CSC to vacuolar membranes via retromer subunit VPS35. Interacts with the HOPS complex subunit VPS39 independent of the HOPS complex at mitochondria-vacuole contact sites (vCLAMPs), providing a physical and metabolic interconnection between the endocytic pathway and mitochondria. This Saccharomyces cerevisiae (strain ATCC 204508 / S288c) (Baker's yeast) protein is Ypt/Rab-type GTPase YPT7 (YPT7).